A 175-amino-acid chain; its full sequence is MSIYSIVTAPDERLKQKSKPVLECTDQTRKFMHDMLETMYNANGAGLAAVQVGVLQRILVIDIKAHDPVERPKDFYPLFIVNPEIIEQSTELVTANEGCISLPEQRIEVMRPESVKIRYLDYHGKSQELKANDWLARVIQHEYDHLEGKLMVDYLSNLKRDVVLRKLKKLKNNIV.

Residues Cys99 and His141 each coordinate Fe cation. Glu142 is an active-site residue. Residue His145 coordinates Fe cation.

It belongs to the polypeptide deformylase family. The cofactor is Fe(2+).

The catalysed reaction is N-terminal N-formyl-L-methionyl-[peptide] + H2O = N-terminal L-methionyl-[peptide] + formate. Functionally, removes the formyl group from the N-terminal Met of newly synthesized proteins. Requires at least a dipeptide for an efficient rate of reaction. N-terminal L-methionine is a prerequisite for activity but the enzyme has broad specificity at other positions. The polypeptide is Peptide deformylase (Rickettsia typhi (strain ATCC VR-144 / Wilmington)).